The chain runs to 406 residues: Membrane protein UL43 homolog (406 aa).

10 consecutive transmembrane segments (helical) span residues 48–68, 71–91, 103–123, 126–146, 162–182, 188–208, 266–286, 299–319, 339–359, and 386–406; these read LFLVGLQASVITSGLILQYHV, AAVNATIMGLIVVSGLWPTSV, CLQTVVVLGFAVLWAVGCPIS, LPFVELLGISISAITGTVAAV, IYFYVMMLGTGLGGLLTVILY, YEVLIGLCISIVTLVSIVDAA, SVIPPVLYIVTPLMWAISHII, LAVSIGGHIIAFGLQGFAVLY, IAVTFAGISWGAIIILTSTVA, and VYHVCVYIIINLCYLCGTYVS.

This sequence belongs to the alphaherpesvirinae HHV-1 UL43 family.

The protein localises to the membrane. This chain is Membrane protein UL43 homolog, found in Varicella-zoster virus (strain Dumas) (HHV-3).